The primary structure comprises 301 residues: uncharacterized protein (301 aa).

This is an uncharacterized protein from Methanocaldococcus jannaschii (strain ATCC 43067 / DSM 2661 / JAL-1 / JCM 10045 / NBRC 100440) (Methanococcus jannaschii).